An 859-amino-acid chain; its full sequence is DNA mismatch repair protein MutS (859 aa).

622-629 (GPNMGGKS) lines the ATP pocket.

This sequence belongs to the DNA mismatch repair MutS family.

In terms of biological role, this protein is involved in the repair of mismatches in DNA. It is possible that it carries out the mismatch recognition step. This protein has a weak ATPase activity. The polypeptide is DNA mismatch repair protein MutS (Coxiella burnetii (strain RSA 493 / Nine Mile phase I)).